A 539-amino-acid polypeptide reads, in one-letter code: Glycerophosphoinositol inositolphosphodiesterase GDPD2 (539 aa).

At 1–40 (MADSPGCCSIWARCLHCLYSCHWRKYPKQKMQTSKCDCIW) the chain is on the cytoplasmic side. The chain crosses the membrane as a helical span at residues 41-61 (FGLLFLTFLLSLGWLYIGLIL). Topologically, residues 62–83 (LNDLHNFNEFLFRHWGHWMDWS) are extracellular. A helical transmembrane segment spans residues 84-104 (LIVLLVVSLLVTYASLLLLLG). Over 105-121 (LLLQLCGQPLHLHSLHK) the chain is Cytoplasmic. Residues 122-142 (VLLLLIVLLVAAGLVGLDIQW) form a helical membrane-spanning segment. At 143 to 154 (RQEWHSLRLSLQ) the chain is on the extracellular side. Residues 155–175 (ATAPFLHIGAVAGITLLAWPV) form a helical membrane-spanning segment. The Cytoplasmic segment spans residues 176-189 (ADTFYRIHPRGPKV). A helical transmembrane segment spans residues 190–210 (LLLLLFFGVTLVIYLMPLLFI). Residues 211-491 (SSPCIMKLRD…PLWLLPPQKY (281 aa)) lie on the Extracellular side of the membrane. A GP-PDE domain is found at 225 to 480 (PGLVGHRGAP…NACQLLQQMQ (256 aa)). The a divalent metal cation site is built by Glu-257, Asp-259, and His-272. A glycan (N-linked (GlcNAc...) asparagine) is linked at Asn-333. The chain crosses the membrane as a helical span at residues 492–512 (LMIWVITDCASILLLLSIFLL). Topologically, residues 513-539 (RGGCAKRNRTGLETAVLLTKINNFASE) are cytoplasmic.

It belongs to the glycerophosphoryl diester phosphodiesterase family. The cofactor is Ca(2+). As to expression, detected in spleen, femur and calvaria.

The protein localises to the cell membrane. It localises to the cytoplasm. Its subcellular location is the cytoskeleton. The catalysed reaction is sn-glycero-3-phospho-1D-myo-inositol + H2O = 1D-myo-inositol 1-phosphate + glycerol + H(+). Its function is as follows. Has glycerophosphoinositol inositolphosphodiesterase activity and specifically hydrolyzes glycerophosphoinositol, with no activity for other substrates such as glycerophosphoinositol 4-phosphate, glycerophosphocholine, glycerophosphoethanolamine, and glycerophosphoserine. Accelerates the program of osteoblast differentiation and growth. May play a role in remodeling of the actin cytoskeleton. The sequence is that of Glycerophosphoinositol inositolphosphodiesterase GDPD2 (Gdpd2) from Mus musculus (Mouse).